Reading from the N-terminus, the 369-residue chain is Protein-glutamate methylesterase/protein-glutamine glutaminase of group 3 operon (369 aa).

In terms of domain architecture, Response regulatory spans 11–128 (RVLIVDDSAA…DLERQEASIR (118 aa)). Aspartate 62 is subject to 4-aspartylphosphate. Residues 136-168 (ATETTRRRSQPEPRPLAPGPKLTADEILPARPP) form a disordered region. One can recognise a CheB-type methylesterase domain in the interval 170 to 358 (PVPETMPVVC…LDRLAARIME (189 aa)). Active-site residues include serine 183, histidine 209, and aspartate 305.

Belongs to the CheB family. Post-translationally, phosphorylated in vitro by CheA2, but not by CheA1. Phosphorylation of the N-terminal regulatory domain activates the methylesterase activity.

It localises to the cytoplasm. It carries out the reaction [protein]-L-glutamate 5-O-methyl ester + H2O = L-glutamyl-[protein] + methanol + H(+). The catalysed reaction is L-glutaminyl-[protein] + H2O = L-glutamyl-[protein] + NH4(+). Its function is as follows. Involved in chemotaxis. Part of a chemotaxis signal transduction system that modulates chemotaxis in response to various stimuli. Catalyzes the demethylation of specific methylglutamate residues introduced into the chemoreceptors (methyl-accepting chemotaxis proteins or MCP) by CheR. Also mediates the irreversible deamidation of specific glutamine residues to glutamic acid. In Cereibacter sphaeroides (Rhodobacter sphaeroides), this protein is Protein-glutamate methylesterase/protein-glutamine glutaminase of group 3 operon (cheB3).